A 27-amino-acid polypeptide reads, in one-letter code: Snake venom serine protease Afaacytin alpha/beta/beta' chains (27 aa).

A Peptidase S1 domain is found at Val-1 to Glu-27.

Belongs to the peptidase S1 family. Snake venom subfamily. In terms of assembly, heterodimer of an alpha and a beta chain. Subunit beta is constituted of two disulfide-linked polypeptidic chains, beta and beta'. Calcium appears to be required for structural cohesion of the molecule. Post-translationally, both chains alpha and beta are N-glycosylated. In terms of tissue distribution, expressed by the venom gland.

It localises to the secreted. With respect to regulation, inhibited by diisopropylfluorophosphate (DFP), benzamidine, heparin and hirudin, but not by plasmatic thrombin inhibitors, antithrombin-III and ecotin. In terms of biological role, snake venom serine protease that exhibits alpha-fibrinase and beta-fibrinogenase activities. It replaces missing factors VIII (F8) and IX (F9) in deficient plasmas by activating purified human factor X (F10) into factor Xa. It releases serotonin from platelets and induces platelet aggregation in human (but not in rabbit). Has caseinolytic, arginine-esterase and amidase activities. This chain is Snake venom serine protease Afaacytin alpha/beta/beta' chains, found in Cerastes cerastes (Horned desert viper).